The primary structure comprises 314 residues: BRCA2 and CDKN1A-interacting protein (314 aa).

Residues 1 to 56 (MASRSKRRAVESGVPQPPDPPVQRDEEEEKEVENEDEDDDDSDKEKDEEDEVIDEE) are disordered. Acidic residues predominate over residues 25–56 (DEEEEKEVENEDEDDDDSDKEKDEEDEVIDEE). Phosphoserine occurs at positions 42 and 112. The segment at 59–167 (IEFEAYSLSD…EKSMVEQLDK (109 aa)) is interaction with BRCA2. The tract at residues 161–259 (MVEQLDKFLN…NAEEEFFYEK (99 aa)) is interaction with CDKN1A. Ser281 is modified (phosphoserine).

This sequence belongs to the BCP1 family. In terms of assembly, interacts with BRCA2, CDKN1A and MTDH/LYRIC. Isoform 2/alpha, but not isoform 1/beta, interacts with DCTN1/p150-glued and ACTR1A/ARP1. Both isoform 1 and isoform 2 interact with alpha-, beta- and gamma-tubulins. Interacts with TENT5C; the interaction has no effect on TENT5C poly(A) polymerase function. Expressed at high levels in testis and skeletal muscle and at lower levels in brain, heart, kidney, liver, lung, ovary, pancreas, placenta, and spleen.

The protein resides in the nucleus. The protein localises to the cytoplasm. It localises to the cytoskeleton. It is found in the microtubule organizing center. Its subcellular location is the centrosome. The protein resides in the centriole. The protein localises to the spindle pole. Functionally, during interphase, required for microtubule organizing and anchoring activities. During mitosis, required for the organization and stabilization of the spindle pole. Isoform 2/alpha is particularly important for the regulation of microtubule anchoring, microtubule stability, spindle architecture and spindle orientation, compared to isoform 1/beta. May promote cell cycle arrest by enhancing the inhibition of CDK2 activity by CDKN1A. May be required for repair of DNA damage by homologous recombination in conjunction with BRCA2. May not be involved in non-homologous end joining (NHEJ). This Homo sapiens (Human) protein is BRCA2 and CDKN1A-interacting protein (BCCIP).